Here is a 2036-residue protein sequence, read N- to C-terminus: Putative mediator of RNA polymerase II transcription subunit 24 (2036 aa).

8 disordered regions span residues 51-70 (NNNNSNNNNNNNNNNNNNNV), 159-184 (DNIENSNNNNNNNNNNNNNNSNNNIG), 212-451 (SPSP…QTTT), 501-580 (KSVN…NNNN), 754-840 (NLKN…SHQK), 928-1124 (NNNN…NKDL), 1375-1419 (NNKN…NNNN), and 1565-1608 (NSSA…NGDT). Over residues 212–229 (SPSPSSSSSSSTSPSSQQ) the composition is skewed to low complexity. Positions 260–270 (EIMKVKEEPIK) are enriched in basic and acidic residues. 6 stretches are compositionally biased toward low complexity: residues 273–291 (TTTTTTSTTTTTSTTSTTT), 300–311 (TNGNGEETTITT), 387–451 (QPQP…QTTT), 501–539 (KSVNNNNNNNNNNNNNNNNNNNNNYNNNNNDSMDQNSNN), 547–580 (NNNNINNNNNNNNNNNNNNNNNNNNNNNNNNNNN), and 754–770 (NLKNNKNNNNNNNNSNG). A coiled-coil region spans residues 505 to 584 (NNNNNNNNNN…NNNNNNINNI (80 aa)). The span at 778–787 (GSSTDGSNKL) shows a compositional bias: polar residues. 2 stretches are compositionally biased toward low complexity: residues 788-808 (SSTNIEEGNNNNNSSTHLNGN) and 928-943 (NNNNNTNTNNINNNKN). Residues 943-977 (NKNSKKSNNKNKNNKNNNKKNKNNNNNNNNNNNNN) adopt a coiled-coil conformation. The span at 944-964 (KNSKKSNNKNKNNKNNNKKNK) shows a compositional bias: basic residues. Composition is skewed to low complexity over residues 965 to 999 (NNNNNNNNNNNNNNNNNNNNNNNNNNNNNNNNNNN), 1017 to 1118 (NNNN…NNNN), 1385 to 1419 (SNNSSNNSINNINNNNNNNNNNNNNNNNNNNNNNN), 1565 to 1584 (NSSAYSTTTTTSASTSLPKS), and 1594 to 1608 (SSNTSTTTTKNNGDT). A coiled-coil region spans residues 1915 to 1968 (SKNQSLKKKQKLKQKKQQHNNNNGGEYNIDQDHIEQIQQQQQQYQKQQQQRKDE).

Belongs to the Mediator complex subunit 24 family. As to quaternary structure, component of the Mediator complex.

It localises to the nucleus. Its function is as follows. Component of the Mediator complex, a coactivator involved in the regulated transcription of nearly all RNA polymerase II-dependent genes. Mediator functions as a bridge to convey information from gene-specific regulatory proteins to the basal RNA polymerase II transcription machinery. Mediator is recruited to promoters by direct interactions with regulatory proteins and serves as a scaffold for the assembly of a functional preinitiation complex with RNA polymerase II and the general transcription factors. The chain is Putative mediator of RNA polymerase II transcription subunit 24 (med24) from Dictyostelium discoideum (Social amoeba).